The sequence spans 241 residues: GTP cyclohydrolase III (241 aa).

Belongs to the archaeal-type GTP cyclohydrolase family.

The enzyme catalyses GTP + 3 H2O = 2-amino-5-formylamino-6-(5-phospho-D-ribosylamino)pyrimidin-4(3H)-one + 2 phosphate + 2 H(+). In terms of biological role, catalyzes the formation of 2-amino-5-formylamino-6-ribofuranosylamino-4(3H)-pyrimidinone ribonucleotide monophosphate and inorganic phosphate from GTP. Also has an independent pyrophosphate phosphohydrolase activity. The polypeptide is GTP cyclohydrolase III (Aeropyrum pernix (strain ATCC 700893 / DSM 11879 / JCM 9820 / NBRC 100138 / K1)).